The primary structure comprises 475 residues: MTQSVVVQVGQCGNQIGCCFWDLALREHAAVNQKGIYDEAISSFFRNVDTRVVGDGGSISKGKICSLKARAVLIDMEEGVVNEILQGPLRDVFDTKQLITDISGSGNNWAVGHKVFGSLYQDQILEKFRKSAEHCDCLQCFFIIHSMGGGTGSGLGTFLLKVLEDEFPEVYRFVTSIYPSGEDDVITSPYNSILAMKELNEHADCVLPIDNQSLFDIISKIDLMVNSGKLGTTVKPKSLVTSSSGALKKQHKKPFDAMNNIVANLLLNLTSSARFEGSLNMDLNEISMNLVPFPQLHYLVSSLTPLYTLTDVNIPPRRLDQMFSDAFSKDHQLLRADPKHSLYLACALMVRGNVQISDLRRNIERLKPSLQFVSWNQEGWKTSLCSVPPVGHSHSLLALANNTCVKPTFMELKERFMRLYKKKAHLHHYLQVEGMEESCFTEAVSSLSALIQEYDQLDATKNMPVQDLPRLSIAM.

GTP is bound at residue 148–154; it reads GGGTGSG.

The protein belongs to the tubulin family. As to quaternary structure, found in a complex with TEDC1, TEDC2, TUBE1 and TUBD1.

It is found in the cytoplasm. Its subcellular location is the cytoskeleton. It localises to the microtubule organizing center. The protein localises to the centrosome. This Homo sapiens (Human) protein is Tubulin epsilon chain (TUBE1).